The following is a 236-amino-acid chain: CD81 antigen (236 aa).

Residues 1–12 (MGVEGCTKCIKY) are Cytoplasmic-facing. Residues 13–33 (LLFVFNFVFWLAGGVILGVAL) form a helical membrane-spanning segment. The Extracellular segment spans residues 34-63 (WLRHDPQTTNLLYLELGDKPAPNTFYVGIY). The chain crosses the membrane as a helical span at residues 64 to 84 (ILIAVGAVMMFVGFLGCYGAI). The Cytoplasmic segment spans residues 85 to 89 (QESQC). The helical transmembrane segment at 90–112 (LLGTFFTCLVILFACEVAAGIWG) threads the bilayer. Topologically, residues 113–201 (FVNKDQIAKD…QKIDELFSGK (89 aa)) are extracellular. 2 disulfide bridges follow: C156–C190 and C157–C175. Residues 202–224 (LYLIGIAAIVVAVIMIFEMILSM) traverse the membrane as a helical segment. E219 serves as a coordination point for cholesterol. The Cytoplasmic segment spans residues 225–236 (VLCCGIRNSSVY).

It belongs to the tetraspanin (TM4SF) family. As to quaternary structure, homodimer. Part of a complex composed of CD19, CR2/CD21, CD81 and IFITM1/CD225 in the membrane of mature B cells. Interacts (via the second extracellular domain) with CD19; this interaction is initiated early during biosynthesis in the ER and enables trafficking of only properly folded CD19. Part of a complex that includes MHC class II/HLA-DR molecules and IFITM1. Interacts with IFITM1. Interacts with IFITM2 and IFITM3. Part of integrin-tetraspanin complex composed of CD9, CD81, beta-1 and beta-2 integrins in the membrane of monocyte/macrophages. Interacts (via the second extracellular domain) with integrin ITGAV:ITGB3. Interacts with CD247/CD3 zeta, ICAM1 and CD9 at the immune synapse on T cell membrane. Part of a GPCR-tetraspanin complex consisting at least of ADGRG1, CD81, possibly CD9, and GNA11 in which CD81 enhances the association of ADGRG1 with GNA11. Part of a complex composed of CD9, CD81, PTGFRN and IGSF8. Interacts directly with IGSF8. Interacts with CD53 and SCIMP. Interacts with SAMHD1 (via its C-terminus). Interacts with glypican GPC3 and with the transcriptional repressor HHEX; binding to GPC3 decreases the availability of free CD81 for binding to HHEX, resulting in nuclear translocation of HHEX and transcriptional repression. Interacts with CLDN1. Interacts with CLDN6 and CLDN9. In terms of processing, not glycosylated. Post-translationally, likely constitutively palmitoylated at low levels. Protein palmitoylation is up-regulated upon coligation of BCR and CD9-C2R-CD81 complexes in lipid rafts.

The protein resides in the cell membrane. It localises to the basolateral cell membrane. Functionally, structural component of specialized membrane microdomains known as tetraspanin-enriched microdomains (TERMs), which act as platforms for receptor clustering and signaling. Essential for trafficking and compartmentalization of CD19 receptor on the surface of activated B cells. Upon initial encounter with microbial pathogens, enables the assembly of CD19-CR2/CD21 and B cell receptor (BCR) complexes at signaling TERMs, lowering the threshold dose of antigen required to trigger B cell clonal expansion and antibody production. In T cells, facilitates the localization of CD247/CD3 zeta at antigen-induced synapses with B cells, providing for costimulation and polarization toward T helper type 2 phenotype. Present in MHC class II compartments, may also play a role in antigen presentation. Can act both as positive and negative regulator of homotypic or heterotypic cell-cell fusion processes. Positively regulates sperm-egg fusion and may be involved in acrosome reaction. In myoblasts, associates with CD9 and PTGFRN and inhibits myotube fusion during muscle regeneration. In macrophages, associates with CD9 and beta-1 and beta-2 integrins, and prevents macrophage fusion into multinucleated giant cells specialized in ingesting complement-opsonized large particles. Also prevents the fusion of mononuclear cell progenitors into osteoclasts in charge of bone resorption. May regulate the compartmentalization of enzymatic activities. In T cells, defines the subcellular localization of dNTPase SAMHD1 and permits its degradation by the proteasome, thereby controlling intracellular dNTP levels. Also involved in cell adhesion and motility. Positively regulates integrin-mediated adhesion of macrophages, particularly relevant for the inflammatory response in the lung. The sequence is that of CD81 antigen (CD81) from Chlorocebus aethiops (Green monkey).